The primary structure comprises 56 residues: Conotoxin Cal6.41c (56 aa).

An N-terminal signal peptide occupies residues 1-23 (MSGSGAMLLGLLILVAMATSLDT). Intrachain disulfides connect cysteine 27–cysteine 41, cysteine 33–cysteine 50, and cysteine 40–cysteine 54.

Expressed by the venom duct.

It is found in the secreted. In terms of biological role, probable neurotoxin. The sequence is that of Conotoxin Cal6.41c from Californiconus californicus (California cone).